A 204-amino-acid chain; its full sequence is Putative copper-binding protein (204 aa).

Residues Cys77, Cys81, and His166 each contribute to the Cu cation site.

The protein belongs to the SCO1/2 family.

This is Putative copper-binding protein (scoP) from Stutzerimonas stutzeri (Pseudomonas stutzeri).